Consider the following 534-residue polypeptide: Pentatricopeptide repeat-containing protein At5g50990 (534 aa).

PPR repeat units lie at residues 128–158 (NVIT…MLSF), 164–198 (NKFS…GIEL), 199–229 (NAIL…VKRN), 230–264 (DVSI…HVSP), 265–295 (DSIT…MSRR), and 301–331 (KLEH…MPIE). The tract at residues 336–408 (IWRSLLSSSR…AKGKSWLEFG (73 aa)) is type E motif. The type E(+) motif stretch occupies residues 409–439 (GMIHRFKAGDTSHIETKAIYKVLEGLIQKTK). The tract at residues 440–534 (SQGFVSDTDL…DGLCSCRDYW (95 aa)) is type DYW motif.

This sequence belongs to the PPR family. PCMP-H subfamily.

This chain is Pentatricopeptide repeat-containing protein At5g50990 (PCMP-H59), found in Arabidopsis thaliana (Mouse-ear cress).